A 268-amino-acid chain; its full sequence is Tryptophan synthase alpha chain (268 aa).

Active-site proton acceptor residues include glutamate 47 and aspartate 58.

Belongs to the TrpA family. Tetramer of two alpha and two beta chains.

Its subcellular location is the plastid. The protein resides in the chloroplast. It catalyses the reaction (1S,2R)-1-C-(indol-3-yl)glycerol 3-phosphate + L-serine = D-glyceraldehyde 3-phosphate + L-tryptophan + H2O. It participates in amino-acid biosynthesis; L-tryptophan biosynthesis; L-tryptophan from chorismate: step 5/5. Functionally, the alpha subunit is responsible for the aldol cleavage of indoleglycerol phosphate to indole and glyceraldehyde 3-phosphate. This Gracilaria tenuistipitata var. liui (Red alga) protein is Tryptophan synthase alpha chain.